We begin with the raw amino-acid sequence, 572 residues long: Urease subunit alpha (572 aa).

Residues 131–572 (GGIDAHIHFI…LPLAQRYFLF (442 aa)) enclose the Urease domain. 3 residues coordinate Ni(2+): histidine 136, histidine 138, and lysine 219. Lysine 219 carries the post-translational modification N6-carboxylysine. Position 221 (histidine 221) interacts with substrate. The Ni(2+) site is built by histidine 248 and histidine 274. The Proton donor role is filled by histidine 322. Aspartate 362 contributes to the Ni(2+) binding site.

The protein belongs to the metallo-dependent hydrolases superfamily. Urease alpha subunit family. Heterotrimer of UreA (gamma), UreB (beta) and UreC (alpha) subunits. Three heterotrimers associate to form the active enzyme. Ni cation serves as cofactor. Post-translationally, carboxylation allows a single lysine to coordinate two nickel ions.

The protein localises to the cytoplasm. It catalyses the reaction urea + 2 H2O + H(+) = hydrogencarbonate + 2 NH4(+). It functions in the pathway nitrogen metabolism; urea degradation; CO(2) and NH(3) from urea (urease route): step 1/1. This Thermosynechococcus vestitus (strain NIES-2133 / IAM M-273 / BP-1) protein is Urease subunit alpha.